Here is a 323-residue protein sequence, read N- to C-terminus: o-succinylbenzoate synthase (323 aa).

K134 (proton donor) is an active-site residue. Residues D162, E191, and D214 each coordinate Mg(2+). K236 (proton acceptor) is an active-site residue.

The protein belongs to the mandelate racemase/muconate lactonizing enzyme family. MenC type 1 subfamily. It depends on a divalent metal cation as a cofactor.

It catalyses the reaction (1R,6R)-6-hydroxy-2-succinyl-cyclohexa-2,4-diene-1-carboxylate = 2-succinylbenzoate + H2O. It participates in quinol/quinone metabolism; 1,4-dihydroxy-2-naphthoate biosynthesis; 1,4-dihydroxy-2-naphthoate from chorismate: step 4/7. Its pathway is quinol/quinone metabolism; menaquinone biosynthesis. Converts 2-succinyl-6-hydroxy-2,4-cyclohexadiene-1-carboxylate (SHCHC) to 2-succinylbenzoate (OSB). The protein is o-succinylbenzoate synthase of Yersinia pseudotuberculosis serotype I (strain IP32953).